The chain runs to 247 residues: 14-3-3 protein zeta (247 aa).

This sequence belongs to the 14-3-3 family. In terms of assembly, homodimer.

The protein resides in the cytoplasm. In terms of biological role, adapter protein implicated in the regulation of a large spectrum of both general and specialized signaling pathways. Binds to a large number of partners, usually by recognition of a phosphoserine or phosphothreonine motif. Binding generally results in the modulation of the activity of the binding partner. This chain is 14-3-3 protein zeta (14-3-3zeta), found in Bombyx mori (Silk moth).